We begin with the raw amino-acid sequence, 360 residues long: Biotin synthase (360 aa).

The Radical SAM core domain maps to 83–315 (FCGKYFDLCT…KSFLRYCGGR (233 aa)). [4Fe-4S] cluster is bound by residues Cys101, Cys105, and Cys108. Residues Ser145, Cys180, Cys240, and Arg310 each coordinate [2Fe-2S] cluster.

It belongs to the radical SAM superfamily. Biotin synthase family. In terms of assembly, homodimer. Requires [4Fe-4S] cluster as cofactor. [2Fe-2S] cluster serves as cofactor.

It carries out the reaction (4R,5S)-dethiobiotin + (sulfur carrier)-SH + 2 reduced [2Fe-2S]-[ferredoxin] + 2 S-adenosyl-L-methionine = (sulfur carrier)-H + biotin + 2 5'-deoxyadenosine + 2 L-methionine + 2 oxidized [2Fe-2S]-[ferredoxin]. Its pathway is cofactor biosynthesis; biotin biosynthesis; biotin from 7,8-diaminononanoate: step 2/2. Catalyzes the conversion of dethiobiotin (DTB) to biotin by the insertion of a sulfur atom into dethiobiotin via a radical-based mechanism. In Fusobacterium nucleatum subsp. nucleatum (strain ATCC 25586 / DSM 15643 / BCRC 10681 / CIP 101130 / JCM 8532 / KCTC 2640 / LMG 13131 / VPI 4355), this protein is Biotin synthase.